Consider the following 602-residue polypeptide: ATP-dependent RNA helicase DeaD (602 aa).

A Q motif motif is present at residues 6 to 34 (MTFSSFGLNSCIITALNDIGYVQPSPIQA). One can recognise a Helicase ATP-binding domain in the interval 37–208 (IPYLIKGKDV…RRFMKNPKEI (172 aa)). An ATP-binding site is contributed by 50 to 57 (AQTGSGKT). The DEAD box signature appears at 156–159 (DEAD). The 148-residue stretch at 231–378 (KTDALIRFLE…EVNLPKSDFL (148 aa)) folds into the Helicase C-terminal domain.

This sequence belongs to the DEAD box helicase family. DeaD/CsdA subfamily.

It is found in the cytoplasm. It carries out the reaction ATP + H2O = ADP + phosphate + H(+). Functionally, DEAD-box RNA helicase involved in various cellular processes at low temperature, including ribosome biogenesis, mRNA degradation and translation initiation. The protein is ATP-dependent RNA helicase DeaD of Buchnera aphidicola subsp. Baizongia pistaciae (strain Bp).